The following is a 208-amino-acid chain: Thiamine-phosphate synthase (208 aa).

4-amino-2-methyl-5-(diphosphooxymethyl)pyrimidine is bound by residues 38-42 (QYRSK) and Asn70. Mg(2+) contacts are provided by Asp71 and Asp90. Thr109 is a binding site for 4-amino-2-methyl-5-(diphosphooxymethyl)pyrimidine. Residue 136 to 138 (SAT) coordinates 2-[(2R,5Z)-2-carboxy-4-methylthiazol-5(2H)-ylidene]ethyl phosphate. Lys139 lines the 4-amino-2-methyl-5-(diphosphooxymethyl)pyrimidine pocket. Residues Gly166 and 186–187 (VS) each bind 2-[(2R,5Z)-2-carboxy-4-methylthiazol-5(2H)-ylidene]ethyl phosphate.

This sequence belongs to the thiamine-phosphate synthase family. It depends on Mg(2+) as a cofactor.

It catalyses the reaction 2-[(2R,5Z)-2-carboxy-4-methylthiazol-5(2H)-ylidene]ethyl phosphate + 4-amino-2-methyl-5-(diphosphooxymethyl)pyrimidine + 2 H(+) = thiamine phosphate + CO2 + diphosphate. It carries out the reaction 2-(2-carboxy-4-methylthiazol-5-yl)ethyl phosphate + 4-amino-2-methyl-5-(diphosphooxymethyl)pyrimidine + 2 H(+) = thiamine phosphate + CO2 + diphosphate. The catalysed reaction is 4-methyl-5-(2-phosphooxyethyl)-thiazole + 4-amino-2-methyl-5-(diphosphooxymethyl)pyrimidine + H(+) = thiamine phosphate + diphosphate. It participates in cofactor biosynthesis; thiamine diphosphate biosynthesis; thiamine phosphate from 4-amino-2-methyl-5-diphosphomethylpyrimidine and 4-methyl-5-(2-phosphoethyl)-thiazole: step 1/1. Condenses 4-methyl-5-(beta-hydroxyethyl)thiazole monophosphate (THZ-P) and 2-methyl-4-amino-5-hydroxymethyl pyrimidine pyrophosphate (HMP-PP) to form thiamine monophosphate (TMP). In Aromatoleum aromaticum (strain DSM 19018 / LMG 30748 / EbN1) (Azoarcus sp. (strain EbN1)), this protein is Thiamine-phosphate synthase.